Here is a 364-residue protein sequence, read N- to C-terminus: Heme A synthase (364 aa).

The next 8 helical transmembrane spans lie at Ala25–Gly45, Phe111–Gly131, Trp139–Val159, Leu174–Gly194, Ala212–Leu232, Val270–Val290, Ser305–Leu325, and Val327–Val347. A heme-binding site is contributed by His274. A heme-binding site is contributed by His335.

It belongs to the COX15/CtaA family. Type 2 subfamily. As to quaternary structure, interacts with CtaB. Heme b serves as cofactor.

Its subcellular location is the cell membrane. The catalysed reaction is Fe(II)-heme o + 2 A + H2O = Fe(II)-heme a + 2 AH2. It functions in the pathway porphyrin-containing compound metabolism; heme A biosynthesis; heme A from heme O: step 1/1. In terms of biological role, catalyzes the conversion of heme O to heme A by two successive hydroxylations of the methyl group at C8. The first hydroxylation forms heme I, the second hydroxylation results in an unstable dihydroxymethyl group, which spontaneously dehydrates, resulting in the formyl group of heme A. This is Heme A synthase from Allorhizobium ampelinum (strain ATCC BAA-846 / DSM 112012 / S4) (Agrobacterium vitis (strain S4)).